A 419-amino-acid polypeptide reads, in one-letter code: MSAEEYIEVSSSPDIFTDDDDMITIEPELNKNPKDCNSKRKRSVTECCEIRLITSKCDFESTQQLVHHNCTGHKVHEHNLNAVDEEDFDTENLPLLFSSFSDNESDILEPDLNTRVAEDNDVLLSRYSKIKNSASCRNTFEHSAYHSNREEISSSGFYYHRKPQLFEKSLEKLGNKSIEANRSPLIKELCESANSTENVCFSVSTVDEIQQRHPSAGHSIDSTCQSNSFLEGDSATHKKKKTDNIKEFTSCEFNDRSRTLLNYAGYMDTNKNADNEAKSLKEKLENFPVEKLRAIAESYGFKSSDSKATLIKIVESCLDAIDSRSQSKKLGKETPHDYLITSTKTVLEFDDIVTQTHRAISQVVKQAKDNSVWIKILTYSAIDVEEFQLWLKRKNLNVSLDLIKSWCDKYGVLMKGSWH.

Belongs to the SLX4 family. Forms a heterodimer with slx1. Post-translationally, phosphorylated in response to DNA damage.

It is found in the nucleus. Its subcellular location is the nucleolus. In terms of biological role, regulatory subunit of the slx1-slx4 structure-specific endonuclease that resolves DNA secondary structures generated during DNA repair and recombination. Has endonuclease activity towards branched DNA substrates, introducing single-strand cuts in duplex DNA close to junctions with ss-DNA. Has a preference for stem-loop (SL) and splayed arm Y structures. Introduces a single-strand cut in duplex DNA on the 3' side of a double-strand/single-strand junction with respect to the single-strand moving 3' to 5' away from the junction. Plays a critical role in maintaining the integrity of the ribosomal DNA (rDNA) loci, where it has a role in re-starting stalled replication forks. The complex initiates homologous recombination (HR) events, used to maintain rDNA copy number, in the rDNA repeats that are processed by a mechanism that requires rad22, but not rhp51. Has Holliday junction resolvase activity in vitro. Slx4 is required for efficient processing of DNA substrates. The sequence is that of Structure-specific endonuclease subunit slx4 from Schizosaccharomyces pombe (strain 972 / ATCC 24843) (Fission yeast).